We begin with the raw amino-acid sequence, 299 residues long: MKVHEKVSELIGNTPIIHLKKFGINVFAKCEFLNPSHSIKDRAAFEMIKDALDSKKINQDTTIVEATSGNTGISLAMICADLGLKFIAVMPESMSLERRKMITLFGARLELTPANLGMKGAVDKANEILLNTPNSFMVSQFENISNKNAHRKNTALEILRDLDNELDIFVAGFGTGGTISGVGEILKEKLEKVHIVGVEPLNSPLLSKGEAGSHKIQGIGANFIPAILNKEVIDEVITVSNEDAINTAKELAKSGLMVGISSGANVFAASMLAKKFPDKRILTMLNDTAERYLSTDLFA.

An N6-(pyridoxal phosphate)lysine modification is found at Lys40. Residues Asn70, 174-178, and Ser261 contribute to the pyridoxal 5'-phosphate site; that span reads GTGGT.

The protein belongs to the cysteine synthase/cystathionine beta-synthase family. Pyridoxal 5'-phosphate is required as a cofactor.

It carries out the reaction O-acetyl-L-serine + hydrogen sulfide = L-cysteine + acetate. The protein operates within amino-acid biosynthesis; L-cysteine biosynthesis; L-cysteine from L-serine: step 2/2. The sequence is that of Cysteine synthase B (cysM) from Campylobacter jejuni subsp. jejuni serotype O:2 (strain ATCC 700819 / NCTC 11168).